Here is a 152-residue protein sequence, read N- to C-terminus: Putative RRN3-like protein RRN3P1 (152 aa).

This sequence belongs to the RRN3 family.

The protein is Putative RRN3-like protein RRN3P1 (RRN3P1) of Homo sapiens (Human).